A 325-amino-acid polypeptide reads, in one-letter code: uncharacterized protein (325 aa).

Residues 1-69 (MAMMTTTTTT…KNRRVSVTVS (69 aa)) constitute a chloroplast transit peptide. N-acetylalanine is present on Ala-70.

The protein belongs to the NAD(P)-dependent epimerase/dehydratase family.

Its subcellular location is the plastid. It is found in the chloroplast. This is an uncharacterized protein from Arabidopsis thaliana (Mouse-ear cress).